Here is a 495-residue protein sequence, read N- to C-terminus: Cobyric acid synthase (495 aa).

A GATase cobBQ-type domain is found at Gly-258–Phe-427. Cys-339 acts as the Nucleophile in catalysis. The active site involves His-419.

It belongs to the CobB/CobQ family. CobQ subfamily.

It functions in the pathway cofactor biosynthesis; adenosylcobalamin biosynthesis. Catalyzes amidations at positions B, D, E, and G on adenosylcobyrinic A,C-diamide. NH(2) groups are provided by glutamine, and one molecule of ATP is hydrogenolyzed for each amidation. The polypeptide is Cobyric acid synthase (Mycobacterium sp. (strain KMS)).